The sequence spans 476 residues: UDP-N-acetylmuramate--L-alanine ligase (476 aa).

107–113 (GTHGKTT) lines the ATP pocket.

This sequence belongs to the MurCDEF family.

Its subcellular location is the cytoplasm. The enzyme catalyses UDP-N-acetyl-alpha-D-muramate + L-alanine + ATP = UDP-N-acetyl-alpha-D-muramoyl-L-alanine + ADP + phosphate + H(+). It participates in cell wall biogenesis; peptidoglycan biosynthesis. In terms of biological role, cell wall formation. The protein is UDP-N-acetylmuramate--L-alanine ligase of Roseiflexus castenholzii (strain DSM 13941 / HLO8).